Consider the following 279-residue polypeptide: Dermonecrotic toxin LrSicTox-alphaIA1i (279 aa).

Histidine 11 is an active-site residue. Residues glutamate 31 and aspartate 33 each contribute to the Mg(2+) site. Histidine 47 (nucleophile) is an active-site residue. 2 disulfides stabilise this stretch: cysteine 51/cysteine 57 and cysteine 53/cysteine 196. Aspartate 91 contacts Mg(2+). A glycan (N-linked (GlcNAc...) asparagine) is linked at asparagine 256.

Belongs to the arthropod phospholipase D family. Class II subfamily. Mg(2+) serves as cofactor. Expressed by the venom gland.

The protein localises to the secreted. The enzyme catalyses an N-(acyl)-sphingosylphosphocholine = an N-(acyl)-sphingosyl-1,3-cyclic phosphate + choline. It catalyses the reaction an N-(acyl)-sphingosylphosphoethanolamine = an N-(acyl)-sphingosyl-1,3-cyclic phosphate + ethanolamine. The catalysed reaction is a 1-acyl-sn-glycero-3-phosphocholine = a 1-acyl-sn-glycero-2,3-cyclic phosphate + choline. It carries out the reaction a 1-acyl-sn-glycero-3-phosphoethanolamine = a 1-acyl-sn-glycero-2,3-cyclic phosphate + ethanolamine. With respect to regulation, inhibited with low affinity by edelfosine. Dermonecrotic toxins cleave the phosphodiester linkage between the phosphate and headgroup of certain phospholipids (sphingolipid and lysolipid substrates), forming an alcohol (often choline) and a cyclic phosphate. This toxin acts on sphingomyelin (SM). It also acts on a broad range of lysophospholipids, like lysophosphatidylinositol (LPI), lysophosphatidylglycerol (LPG), lysophosphatidylethanolamine (LPE), lysobisphosphatidic acid (LBPA), lysophosphatidylserine (LPS) and lysophosphatidylcholines (LPC) of varying chain lengths. The substrate preference is LPI &gt; LPG &gt; LPS &gt; LPC &gt;&gt; LPE, LBPA. Furthermore, the enzyme also act on cyclic phosphatidic acid and lyso-platelet activating factor (LPAF, an alkyl-LPC). The enzyme does not act on sphingosylphosphorylcholine (SPC, also known as lyso-sphingomyelin) and PAF. The toxin may also act on ceramide phosphoethanolamine (CPE). It acts by transphosphatidylation, releasing exclusively cyclic phosphate products as second products. It does not exhibit detectable PLA1/2 activity. It induces dose-dependent hemolysis and dermonecrosis. Also induces increased vascular permeability, edema, inflammatory response, and platelet aggregation. The chain is Dermonecrotic toxin LrSicTox-alphaIA1i from Loxosceles reclusa (Brown recluse spider).